Consider the following 252-residue polypeptide: D-aminoacyl-tRNA deacylase (252 aa).

The protein belongs to the DtdA deacylase family. Monomer. Requires Zn(2+) as cofactor.

It carries out the reaction a D-aminoacyl-tRNA + H2O = a tRNA + a D-alpha-amino acid + H(+). The catalysed reaction is glycyl-tRNA(Ala) + H2O = tRNA(Ala) + glycine + H(+). Its function is as follows. D-aminoacyl-tRNA deacylase with broad substrate specificity. By recycling D-aminoacyl-tRNA to D-amino acids and free tRNA molecules, this enzyme counteracts the toxicity associated with the formation of D-aminoacyl-tRNA entities in vivo. This Pyrobaculum islandicum (strain DSM 4184 / JCM 9189 / GEO3) protein is D-aminoacyl-tRNA deacylase.